Consider the following 424-residue polypeptide: Tubby protein homolog 1 (424 aa).

A disordered region spans residues 19–47 (MLEDKQKQKRHQSAGSVRTTTTTSSMSMN). The span at 37–47 (TTTTTSSMSMN) shows a compositional bias: low complexity.

This sequence belongs to the TUB family. Interacts with rgb-3.

The protein localises to the cytoplasm. It localises to the cell projection. The protein resides in the axon. Its subcellular location is the dendrite. It is found in the cilium. Functionally, has a role in fat regulation independent of daf-16. Implicated in ciliar sensory function which is required for normal sensory behavior such as chemotaxis. Functions in life span control via the insulin/IGF-1 pathway. Thought to be involved in neuronal trafficking. In Caenorhabditis briggsae, this protein is Tubby protein homolog 1.